The following is a 70-amino-acid chain: MPREIKDIKDFLIKARRKDAKSVKIKKNPENVKFKVRCSRFLYTLVITDKEKAEKLKQSLPPGLQVKEVK.

This sequence belongs to the eukaryotic ribosomal protein eL38 family.

The chain is Large ribosomal subunit protein eL38 (RpL38) from Bombyx mori (Silk moth).